The chain runs to 461 residues: MSLDLDWNLLDDQLSDRFLETINRALEASASKRPSFIGDIQFEKLDFGSDSPDVAIRSITDIWPDFVSIDEPPLRRRGARQTTPASNATTLVESPTDSFGVHHGGVGEIPLRTYTQFDDAAPPNRIHGPPSVVSASVAGSGPMTPAAAAGVANVFSQQWSTALASRGIRAAGMGSATSLPQTQVTSPVDSVPPSPGYFQHWQQHQQLATTGFVPYSVINSRQTSLDASSLRGGGSGPQSSVSQIGVKRDSNSLHPPLGGTYANGLGPRASMRATSAPSFRSISGQNSPGEEREAVASPSSASQLPSLQMRLSLVWPTTTFRLTITTSLLINYPSAAFMSLPLTLSVTGFMMRCGVIVALEGEHQRAHVCLVQEQDDERDPAFVSAGQAAAGSEKKLNSAGINILPQLTFESEVGQHEKHVLKNVGKVEKFIAEVIRKGLEDELVYPNYYTIDLPASKRHSL.

An SMP-LTD domain is found at 1–454 (MSLDLDWNLL…YPNYYTIDLP (454 aa)). Disordered regions lie at residues 75–104 (RRRGARQTTPASNATTLVESPTDSFGVHHG) and 226–301 (DASS…PSSA). 2 stretches are compositionally biased toward polar residues: residues 80–97 (RQTTPASNATTLVESPTD) and 272–288 (RATSAPSFRSISGQNSP).

This sequence belongs to the MDM12 family. Component of the ER-mitochondria encounter structure (ERMES) or MDM complex, composed of MMM1, MDM10, MDM12 and MDM34. An MMM1 homodimer associates with one molecule of MDM12 on each side in a pairwise head-to-tail manner, and the SMP-LTD domains of MMM1 and MDM12 generate a continuous hydrophobic tunnel for phospholipid trafficking.

The protein resides in the mitochondrion outer membrane. It localises to the endoplasmic reticulum membrane. Its function is as follows. Component of the ERMES/MDM complex, which serves as a molecular tether to connect the endoplasmic reticulum (ER) and mitochondria. Components of this complex are involved in the control of mitochondrial shape and protein biogenesis, and function in nonvesicular lipid trafficking between the ER and mitochondria. MDM12 is required for the interaction of the ER-resident membrane protein MMM1 and the outer mitochondrial membrane-resident beta-barrel protein MDM10. The MDM12-MMM1 subcomplex functions in the major beta-barrel assembly pathway that is responsible for biogenesis of all mitochondrial outer membrane beta-barrel proteins, and acts in a late step after the SAM complex. The MDM10-MDM12-MMM1 subcomplex further acts in the TOM40-specific pathway after the action of the MDM12-MMM1 complex. Essential for establishing and maintaining the structure of mitochondria and maintenance of mtDNA nucleoids. The chain is Mitochondrial distribution and morphology protein 12 from Mycosarcoma maydis (Corn smut fungus).